A 145-amino-acid chain; its full sequence is Large ribosomal subunit protein uL15 (145 aa).

A disordered region spans residues 1-57 (MKLNDLSPAPGSRREKHRPGRGIGSGLGKTGGRGHKGQTSRSGGTIAPGFEGGQQPL). The segment covering 21 to 31 (RGIGSGLGKTG) has biased composition (gly residues).

It belongs to the universal ribosomal protein uL15 family. In terms of assembly, part of the 50S ribosomal subunit.

Binds to the 23S rRNA. The sequence is that of Large ribosomal subunit protein uL15 from Pseudomonas fluorescens (strain Pf0-1).